The following is a 297-amino-acid chain: 32 kDa beta-galactoside-binding lectin lec-3 (297 aa).

Galectin domains are found at residues 11-142 and 151-290; these read YRSK…VQWG and ESGI…IQVV. Residue 224 to 230 coordinates a beta-D-galactoside; sequence WGNEERE.

Functionally, binds galactose. The sequence is that of 32 kDa beta-galactoside-binding lectin lec-3 (lec-3) from Caenorhabditis elegans.